The following is a 382-amino-acid chain: Deoxyhypusine synthase (382 aa).

NAD(+) is bound by residues 108–112, 134–136, Glu-140, and Asp-257; these read SNLIS and TAG. 139-140 contributes to the spermidine binding site; sequence EE. Asp-262 serves as a coordination point for spermidine. Gly-304 contacts NAD(+). Residue His-309 coordinates spermidine. 329–330 contributes to the NAD(+) binding site; sequence TG. Spermidine-binding positions include 335–337 and 344–350; these read GSD and EAVSWGK. Lys-350 functions as the Nucleophile in the catalytic mechanism. 363–364 contributes to the NAD(+) binding site; sequence DV.

The protein belongs to the deoxyhypusine synthase family. It depends on NAD(+) as a cofactor.

The catalysed reaction is [eIF5A protein]-L-lysine + spermidine = [eIF5A protein]-deoxyhypusine + propane-1,3-diamine. The protein operates within protein modification; eIF5A hypusination. Its function is as follows. Catalyzes the NAD-dependent oxidative cleavage of spermidine and the subsequent transfer of the butylamine moiety of spermidine to the epsilon-amino group of a specific lysine residue of the eIF-5A precursor protein to form the intermediate deoxyhypusine residue. This chain is Deoxyhypusine synthase (DYS1), found in Eremothecium gossypii (strain ATCC 10895 / CBS 109.51 / FGSC 9923 / NRRL Y-1056) (Yeast).